The chain runs to 920 residues: Chitin synthase C (920 aa).

Disordered regions lie at residues M1–Q41 and I140–P173. Positions Y154 to Q163 are enriched in acidic residues. 5 consecutive transmembrane segments (helical) span residues S466–L486, R564–W584, L608–L628, V640–A660, and M675–V695. An N-linked (GlcNAc...) asparagine glycan is attached at N715. Transmembrane regions (helical) follow at residues F718–I738, F749–C769, A847–A867, and V892–L912.

The protein belongs to the chitin synthase family. Class I subfamily.

The protein resides in the cell membrane. It carries out the reaction [(1-&gt;4)-N-acetyl-beta-D-glucosaminyl](n) + UDP-N-acetyl-alpha-D-glucosamine = [(1-&gt;4)-N-acetyl-beta-D-glucosaminyl](n+1) + UDP + H(+). Functionally, polymerizes chitin, a structural polymer of the cell wall and septum, by transferring the sugar moiety of UDP-GlcNAc to the non-reducing end of the growing chitin polymer. Involved in hyphal growth. The sequence is that of Chitin synthase C from Aspergillus oryzae (strain ATCC 42149 / RIB 40) (Yellow koji mold).